The sequence spans 92 residues: Small ribosomal subunit protein uS19 (92 aa).

Belongs to the universal ribosomal protein uS19 family.

Its function is as follows. Protein S19 forms a complex with S13 that binds strongly to the 16S ribosomal RNA. The chain is Small ribosomal subunit protein uS19 from Methylorubrum extorquens (strain CM4 / NCIMB 13688) (Methylobacterium extorquens).